Here is a 338-residue protein sequence, read N- to C-terminus: Bifunctional methylenetetrahydrofolate dehydrogenase/cyclohydrolase 2, mitochondrial (338 aa).

Substrate-binding positions include 89–93 and 136–138; these read YVRNK and VQL. NAD(+) is bound by residues 205 to 207 and R238; that span reads GRS. A substrate-binding site is contributed by 314–318; the sequence is PGGVG.

It belongs to the tetrahydrofolate dehydrogenase/cyclohydrolase family. Mg(2+) is required as a cofactor. As to expression, widely expressed.

The protein resides in the mitochondrion inner membrane. The catalysed reaction is (6R)-5,10-methylene-5,6,7,8-tetrahydrofolate + NADP(+) = (6R)-5,10-methenyltetrahydrofolate + NADPH. It carries out the reaction (6R)-5,10-methylene-5,6,7,8-tetrahydrofolate + NAD(+) = (6R)-5,10-methenyltetrahydrofolate + NADH. The enzyme catalyses (6R)-5,10-methenyltetrahydrofolate + H2O = (6R)-10-formyltetrahydrofolate + H(+). It functions in the pathway one-carbon metabolism; tetrahydrofolate interconversion. Functionally, bifunctional mitochondrial folate-interconverting enzyme that has both NAD/NADP-dependent methylenetetrahydrofolate dehydrogenase and methenyltetrahydrofolate cyclohydrolase activities. Its function is as follows. Has no NAD/NADP-dependent methylenetetrahydrofolate dehydrogenase activity. This is Bifunctional methylenetetrahydrofolate dehydrogenase/cyclohydrolase 2, mitochondrial from Rattus norvegicus (Rat).